A 175-amino-acid polypeptide reads, in one-letter code: Endothelial cell-specific chemotaxis regulator (175 aa).

Residues 1–24 (MGTVRAARLCGAILGFLLLQGAFG) form the signal peptide. At 25–91 (KPSLITEPLS…PSPTSETVLT (67 aa)) the chain is on the extracellular side. The disordered stretch occupies residues 33–66 (LSSNTGNSSSSEPRSSSSPASAGTPDTSQNITPI). The segment covering 34–60 (SSNTGNSSSSEPRSSSSPASAGTPDTS) has biased composition (low complexity). A helical membrane pass occupies residues 92-112 (VAAFGVISFIVILVVVVIILV). The Cytoplasmic segment spans residues 113–175 (SVVSLRFKCR…KGCPTAEKVI (63 aa)). Residues 124–145 (NKESEDPQKPGSSGLSESCSTA) form a disordered region. Residues 133–145 (PGSSGLSESCSTA) are compositionally biased toward polar residues. At serine 165 the chain carries Phosphoserine.

This sequence belongs to the ECSCR family. As to quaternary structure, interacts with FLNA. Interacts with the 20S proteasome subunit PSMA7. May be heavily O-glycosylated.

It is found in the cell membrane. The protein localises to the cytoplasm. Its function is as follows. Regulates endothelial chemotaxis and tube formation. Has a role in angiogenesis and apoptosis via modulation of the actin cytoskeleton and facilitation of proteasomal degradation of the apoptosis inhibitors BIRC3/IAP1 and BIRC2/IAP2. The chain is Endothelial cell-specific chemotaxis regulator (ECSCR) from Canis lupus familiaris (Dog).